The primary structure comprises 156 residues: Protein-export protein SecB (156 aa).

The protein belongs to the SecB family. Homotetramer, a dimer of dimers. One homotetramer interacts with 1 SecA dimer.

The protein resides in the cytoplasm. In terms of biological role, one of the proteins required for the normal export of preproteins out of the cell cytoplasm. It is a molecular chaperone that binds to a subset of precursor proteins, maintaining them in a translocation-competent state. It also specifically binds to its receptor SecA. This chain is Protein-export protein SecB, found in Pectobacterium carotovorum subsp. carotovorum (strain PC1).